A 141-amino-acid chain; its full sequence is ATP synthase epsilon chain (141 aa).

The protein belongs to the ATPase epsilon chain family. As to quaternary structure, F-type ATPases have 2 components, CF(1) - the catalytic core - and CF(0) - the membrane proton channel. CF(1) has five subunits: alpha(3), beta(3), gamma(1), delta(1), epsilon(1). CF(0) has three main subunits: a, b and c.

It localises to the cell inner membrane. Functionally, produces ATP from ADP in the presence of a proton gradient across the membrane. In Pseudomonas savastanoi pv. phaseolicola (strain 1448A / Race 6) (Pseudomonas syringae pv. phaseolicola (strain 1448A / Race 6)), this protein is ATP synthase epsilon chain.